We begin with the raw amino-acid sequence, 565 residues long: Atlastin-2 (565 aa).

At 1 to 458 (MVLKKGVKFF…NIFYAARTPA (458 aa)) the chain is on the cytoplasmic side. The region spanning 73 to 318 (DLNIVVVSVA…LVPLLLAPEN (246 aa)) is the GB1/RHD3-type G domain. GDP is bound by residues R86, K87, G88, K89, S90, F91, Q157, R226, and D227. The GTP site is built by R86, K87, G88, K89, S90, and F91. Residue S90 participates in Mg(2+) binding. 2 residues coordinate GTP: R226 and D227. Residues 238–266 (LEGGKQFLEKRLQVKKNQHEELQNVRKHI) are a coiled coil. K252 is modified (N6-methyllysine). Residues V285 and N288 each contribute to the GDP site. V285 provides a ligand contact to GTP. The 3HB (three-helix bundle) domain stretch occupies residues 356 to 447 (MLQATAEANN…YANFIKHNDG (92 aa)). The linker stretch occupies residues 448–456 (KNIFYAART). The helical transmembrane segment at 459–479 (TLFAVMFAMYIISGLTGFIGL) threads the bilayer. Residues 480–481 (NS) are Lumenal-facing. A helical transmembrane segment spans residues 482–502 (IAVLCNLVMGLALTFLCTWAY). Residues 503-565 (VKYSGEFREI…VSHHARLKTD (63 aa)) are Cytoplasmic-facing. The segment at 529–565 (KPLGDNLMEENIRQSVTNSIKAGLTDQVSHHARLKTD) is autoinhibitory domain.

It belongs to the TRAFAC class dynamin-like GTPase superfamily. GB1/RHD3 GTPase family. GB1 subfamily. As to quaternary structure, monomeric and homodimeric. The homodimer, transiently formed by two molecules on opposing membranes, is the active form mediating ER membrane fusion. Interacts with REEP5 and RTN3; these proteins are involved in endoplasmic reticulum tubular network organization. Interacts with ZFYVE27; both proteins are involved in endoplasmic reticulum tubular network organization.

The protein resides in the endoplasmic reticulum membrane. It carries out the reaction GTP + H2O = GDP + phosphate + H(+). Atlastin-2 (ATL2) is a membrane-anchored GTPase that mediates the GTP-dependent fusion of endoplasmic reticulum (ER) membranes, maintaining the continuous ER network. It facilitates the formation of three-way junctions where ER tubules intersect. Two atlastin-2 on neighboring ER tubules bind GTP and form loose homodimers through the GB1/RHD3-type G domains and 3HB regions. Upon GTP hydrolysis, the 3HB regions tighten, pulling the membranes together to drive their fusion. After fusion, the homodimer disassembles upon release of inorganic phosphate (Pi). Subsequently, GDP dissociates, resetting the monomers to a conformation ready for a new fusion cycle. The protein is Atlastin-2 of Macaca fascicularis (Crab-eating macaque).